A 465-amino-acid polypeptide reads, in one-letter code: Methionine aminopeptidase 2-2 (465 aa).

A compositionally biased stretch (basic residues) spans 1–11 (MGSKTPHNHRR). Residues 1–89 (MGSKTPHNHR…KKKKNTKELE (89 aa)) are disordered. The segment covering 43–54 (GESEGGEDEDDD) has biased composition (acidic residues). Residues 73–84 (RNKRKKKKKKKN) are compositionally biased toward basic residues. His217 lines the substrate pocket. A divalent metal cation contacts are provided by Asp238, Asp249, and His318. Residue His326 participates in substrate binding. The a divalent metal cation site is built by Glu351 and Glu446.

Belongs to the peptidase M24A family. Methionine aminopeptidase eukaryotic type 2 subfamily. The cofactor is Co(2+). It depends on Zn(2+) as a cofactor. Mn(2+) is required as a cofactor. Fe(2+) serves as cofactor.

It is found in the cytoplasm. It carries out the reaction Release of N-terminal amino acids, preferentially methionine, from peptides and arylamides.. In terms of biological role, cotranslationally removes the N-terminal methionine from nascent proteins. The N-terminal methionine is often cleaved when the second residue in the primary sequence is small and uncharged (Met-Ala-, Cys, Gly, Pro, Ser, Thr, or Val). This Ajellomyces capsulatus (strain G186AR / H82 / ATCC MYA-2454 / RMSCC 2432) (Darling's disease fungus) protein is Methionine aminopeptidase 2-2.